Here is a 420-residue protein sequence, read N- to C-terminus: Probable acetate kinase (420 aa).

N10 lines the Mg(2+) pocket. An ATP-binding site is contributed by K17. R97 contributes to the substrate binding site. Residue D153 is the Proton donor/acceptor of the active site. Residue 213 to 217 (HIGSG) coordinates ATP. E403 lines the Mg(2+) pocket.

It belongs to the acetokinase family. Mg(2+) is required as a cofactor.

The enzyme catalyses acetate + ATP = acetyl phosphate + ADP. It participates in metabolic intermediate biosynthesis; acetyl-CoA biosynthesis; acetyl-CoA from acetate: step 1/2. The chain is Probable acetate kinase from Emericella nidulans (strain FGSC A4 / ATCC 38163 / CBS 112.46 / NRRL 194 / M139) (Aspergillus nidulans).